A 480-amino-acid polypeptide reads, in one-letter code: Uridine 5'-monophosphate synthase (480 aa).

Alanine 2 bears the N-acetylalanine mark. The OPRTase stretch occupies residues 2–214; the sequence is AVARAALGPL…VFVAANHNGS (213 aa). At tyrosine 37 the chain carries Phosphotyrosine. A Phosphoserine modification is found at serine 214. Residues 215-220 form a domain linker region; that stretch reads PLSIKE. The OMPdecase stretch occupies residues 221-480; the sequence is APKELSFGAR…WEAYLSRLGV (260 aa). Serine 257 provides a ligand contact to orotidine 5'-phosphate. UMP is bound by residues serine 257, aspartate 259, and 281 to 283; that span reads KTH. Position 281 (lysine 281) interacts with orotidine 5'-phosphate. Catalysis depends on for OMPdecase activity residues aspartate 312, lysine 314, and aspartate 317. Orotidine 5'-phosphate is bound by residues lysine 314, aspartate 317, threonine 321, serine 372, 430–432, and 450–451; these read QQY and GR. UMP contacts are provided by residues aspartate 317, threonine 321, serine 372, 430 to 432, and 450 to 451; these read QQY and GR.

The protein in the N-terminal section; belongs to the purine/pyrimidine phosphoribosyltransferase family. This sequence in the C-terminal section; belongs to the OMP decarboxylase family. As to quaternary structure, homodimer; dimerization is required for enzymatic activity.

It carries out the reaction orotidine 5'-phosphate + diphosphate = orotate + 5-phospho-alpha-D-ribose 1-diphosphate. The catalysed reaction is orotidine 5'-phosphate + H(+) = UMP + CO2. Its pathway is pyrimidine metabolism; UMP biosynthesis via de novo pathway; UMP from orotate: step 1/2. It functions in the pathway pyrimidine metabolism; UMP biosynthesis via de novo pathway; UMP from orotate: step 2/2. Bifunctional enzyme catalyzing the last two steps of de novo pyrimidine biosynthesis, orotate phosphoribosyltransferase (OPRT), which converts orotate to orotidine-5'-monophosphate (OMP), and orotidine-5'-monophosphate decarboxylase (ODC), the terminal enzymatic reaction that decarboxylates OMP to uridine monophosphate (UMP). The chain is Uridine 5'-monophosphate synthase from Homo sapiens (Human).